Consider the following 63-residue polypeptide: Large ribosomal subunit protein uL29 (63 aa).

The protein belongs to the universal ribosomal protein uL29 family.

The protein is Large ribosomal subunit protein uL29 of Pelagibacter ubique (strain HTCC1062).